We begin with the raw amino-acid sequence, 616 residues long: uncharacterized protein (616 aa).

The protein belongs to the UbiD family.

This is an uncharacterized protein from Helicobacter pylori (strain J99 / ATCC 700824) (Campylobacter pylori J99).